Here is a 796-residue protein sequence, read N- to C-terminus: Molybdenum cofactor sulfurase (796 aa).

The residue at position 246 (Lys-246) is an N6-(pyridoxal phosphate)lysine. Residue Cys-418 is part of the active site. The 147-residue stretch at 650 to 796 folds into the MOSC domain; that stretch reads LRLLRQSSQR…LTCGDVVVVT (147 aa). The residue at position 752 (Ser-752) is a Phosphoserine.

Belongs to the class-V pyridoxal-phosphate-dependent aminotransferase family. MOCOS subfamily. Pyridoxal 5'-phosphate is required as a cofactor.

It catalyses the reaction Mo-molybdopterin + L-cysteine + AH2 = thio-Mo-molybdopterin + L-alanine + A + H2O. In terms of biological role, sulfurates the molybdenum cofactor. Sulfation of molybdenum is essential for xanthine dehydrogenase (XDH) and aldehyde oxidase (ADO) enzymes in which molybdenum cofactor is liganded by 1 oxygen and 1 sulfur atom in active form. The polypeptide is Molybdenum cofactor sulfurase (Drosophila persimilis (Fruit fly)).